A 338-amino-acid polypeptide reads, in one-letter code: Ornithine carbamoyltransferase, catabolic (338 aa).

Carbamoyl phosphate is bound by residues 58–61, glutamine 85, arginine 109, and 136–139; these read STRT and HPTQ. L-ornithine is bound by residues asparagine 168, aspartate 232, and 236-237; that span reads SM. Residues 273 to 274 and arginine 318 each bind carbamoyl phosphate; that span reads CL.

Belongs to the aspartate/ornithine carbamoyltransferase superfamily. OTCase family.

The protein localises to the cytoplasm. It catalyses the reaction carbamoyl phosphate + L-ornithine = L-citrulline + phosphate + H(+). It functions in the pathway amino-acid degradation; L-arginine degradation via ADI pathway; carbamoyl phosphate from L-arginine: step 2/2. Reversibly catalyzes the transfer of the carbamoyl group from carbamoyl phosphate (CP) to the N(epsilon) atom of ornithine (ORN) to produce L-citrulline. In Streptococcus pneumoniae serotype 4 (strain ATCC BAA-334 / TIGR4), this protein is Ornithine carbamoyltransferase, catabolic.